We begin with the raw amino-acid sequence, 273 residues long: Dermonecrotic toxin LhSicTox-alphaIA2aviii (273 aa).

The active site involves His-5. Positions 25 and 27 each coordinate Mg(2+). Residue His-41 is the Nucleophile of the active site. 2 disulfide bridges follow: Cys-45-Cys-51 and Cys-47-Cys-190. Asp-85 is a binding site for Mg(2+).

Belongs to the arthropod phospholipase D family. Class II subfamily. The cofactor is Mg(2+). In terms of tissue distribution, expressed by the venom gland.

The protein localises to the secreted. The enzyme catalyses an N-(acyl)-sphingosylphosphocholine = an N-(acyl)-sphingosyl-1,3-cyclic phosphate + choline. It carries out the reaction an N-(acyl)-sphingosylphosphoethanolamine = an N-(acyl)-sphingosyl-1,3-cyclic phosphate + ethanolamine. The catalysed reaction is a 1-acyl-sn-glycero-3-phosphocholine = a 1-acyl-sn-glycero-2,3-cyclic phosphate + choline. It catalyses the reaction a 1-acyl-sn-glycero-3-phosphoethanolamine = a 1-acyl-sn-glycero-2,3-cyclic phosphate + ethanolamine. Its function is as follows. Dermonecrotic toxins cleave the phosphodiester linkage between the phosphate and headgroup of certain phospholipids (sphingolipid and lysolipid substrates), forming an alcohol (often choline) and a cyclic phosphate. This toxin acts on sphingomyelin (SM). It may also act on ceramide phosphoethanolamine (CPE), lysophosphatidylcholine (LPC) and lysophosphatidylethanolamine (LPE), but not on lysophosphatidylserine (LPS), and lysophosphatidylglycerol (LPG). It acts by transphosphatidylation, releasing exclusively cyclic phosphate products as second products. Induces dermonecrosis, hemolysis, increased vascular permeability, edema, inflammatory response, and platelet aggregation. The protein is Dermonecrotic toxin LhSicTox-alphaIA2aviii of Loxosceles hirsuta (Recluse spider).